Consider the following 275-residue polypeptide: Type III pantothenate kinase (275 aa).

6-13 (DAGNTNIV) provides a ligand contact to ATP. 108 to 111 (GADR) serves as a coordination point for substrate. Aspartate 110 acts as the Proton acceptor in catalysis. Aspartate 130 contacts K(+). Residue threonine 133 coordinates ATP. Threonine 187 lines the substrate pocket.

The protein belongs to the type III pantothenate kinase family. In terms of assembly, homodimer. NH4(+) is required as a cofactor. Requires K(+) as cofactor.

The protein resides in the cytoplasm. It catalyses the reaction (R)-pantothenate + ATP = (R)-4'-phosphopantothenate + ADP + H(+). The protein operates within cofactor biosynthesis; coenzyme A biosynthesis; CoA from (R)-pantothenate: step 1/5. Functionally, catalyzes the phosphorylation of pantothenate (Pan), the first step in CoA biosynthesis. The protein is Type III pantothenate kinase of Zymomonas mobilis subsp. mobilis (strain ATCC 31821 / ZM4 / CP4).